The following is a 1169-amino-acid chain: Pesticidal crystal protein Cry1Fb (1169 aa).

It belongs to the delta endotoxin family.

In terms of biological role, promotes colloidosmotic lysis by binding to the midgut epithelial cells of insects. The protein is Pesticidal crystal protein Cry1Fb (cry1Fb) of Bacillus thuringiensis subsp. morrisoni.